Here is a 90-residue protein sequence, read N- to C-terminus: Barstar (90 aa).

It belongs to the barstar family.

It localises to the cytoplasm. Functionally, inhibitor of the ribonuclease barnase. Forms a one-to-one non-covalent complex. This Bacillus amyloliquefaciens (Bacillus velezensis) protein is Barstar.